The primary structure comprises 99 residues: Co-chaperonin GroES (99 aa).

Belongs to the GroES chaperonin family. Heptamer of 7 subunits arranged in a ring. Interacts with the chaperonin GroEL.

It localises to the cytoplasm. Its function is as follows. Together with the chaperonin GroEL, plays an essential role in assisting protein folding. The GroEL-GroES system forms a nano-cage that allows encapsulation of the non-native substrate proteins and provides a physical environment optimized to promote and accelerate protein folding. GroES binds to the apical surface of the GroEL ring, thereby capping the opening of the GroEL channel. This Corynebacterium glutamicum (strain R) protein is Co-chaperonin GroES.